The chain runs to 438 residues: Polycomb protein eed-A (438 aa).

A disordered region spans residues 1 to 67; sequence MSEASGRAAG…NAPGRKAWGK (67 aa). The segment covering 40 to 57 has biased composition (polar residues); the sequence is SIESGTNTERPDTPTNAA. WD repeat units lie at residues 88–131, 139–182, 185–225, 231–270, 301–338, 356–396, and 405–438; these read DHNQ…DIRL, DADE…CIKH, GHGN…LVAI, GHRD…MKTA, IHRN…DDID, SQCD…PHKA, and KCAS…DRLR.

It belongs to the WD repeat ESC family. In terms of assembly, component of the prc2/eed-ezh2 complex. Interacts with yy1. Can interact with ezh2, hdac1 and taf9.

It is found in the nucleus. In terms of biological role, polycomb group (PcG) protein. Component of the prc2/eed-ezh2 complex, which methylates 'Lys-9' and 'Lys-27' of histone H3, leading to transcriptional repression of the affected target gene. This Xenopus laevis (African clawed frog) protein is Polycomb protein eed-A (eed-a).